Here is a 465-residue protein sequence, read N- to C-terminus: Phytase A (465 aa).

An N-terminal signal peptide occupies residues 1 to 26 (MVTLTFLLSAAYLLSGRVSAAPSSAG). A disulfide bond links cysteine 30 and cysteine 39. 1D-myo-inositol hexakisphosphate-binding residues include glutamine 49, tyrosine 50, arginine 80, histidine 81, arginine 84, and threonine 87. 4 cysteine pairs are disulfide-bonded: cysteine 70-cysteine 412, cysteine 213-cysteine 463, cysteine 262-cysteine 280, and cysteine 434-cysteine 442. The active-site Nucleophile is histidine 81. Residue asparagine 104 is glycosylated (N-linked (GlcNAc...) asparagine). Arginine 164 contributes to the 1D-myo-inositol hexakisphosphate binding site. N-linked (GlcNAc...) asparagine glycosylation is present at asparagine 205. A 1D-myo-inositol hexakisphosphate-binding site is contributed by aspartate 209. Asparagine 228 carries N-linked (GlcNAc...) asparagine glycosylation. Lysine 299 contacts 1D-myo-inositol hexakisphosphate. 2 N-linked (GlcNAc...) asparagine glycosylation sites follow: asparagine 337 and asparagine 350. 1D-myo-inositol hexakisphosphate is bound by residues histidine 359 and aspartate 360. N-linked (GlcNAc...) asparagine glycosylation occurs at asparagine 374.

It belongs to the histidine acid phosphatase family. As to quaternary structure, monomer.

It is found in the secreted. It catalyses the reaction 1D-myo-inositol hexakisphosphate + H2O = 1D-myo-inositol 1,2,4,5,6-pentakisphosphate + phosphate. The catalysed reaction is 1D-myo-inositol 1,2,4,5,6-pentakisphosphate + H2O = 1D-myo-inositol 1,2,5,6-tetrakisphosphate + phosphate. The enzyme catalyses 1D-myo-inositol 1,2,5,6-tetrakisphosphate + H2O = 1D-myo-inositol 1,2,6-trisphosphate + phosphate. It carries out the reaction 1D-myo-inositol 1,2,6-trisphosphate + H2O = 1D-myo-inositol 1,2-bisphosphate + phosphate. It catalyses the reaction 1D-myo-inositol 1,2-bisphosphate + H2O = 1D-myo-inositol 2-phosphate + phosphate. Its function is as follows. Catalyzes the phosphate monoester hydrolysis of phytic acid (myo-inositol hexakisphosphate), which results in the stepwise formation of myo-inositol pentakis-, tetrakis-, tris-, bis-, and monophosphates, as well as the liberation of inorganic phosphate. Myo-inositol 2-monophosphate is the end product. Has a broad substrate specificity and is also able to dephosphorylate other classic acid phosphatase substrates such as p-nitrophenyl phosphate, phenyl phosphate, fructose 1,6-bisphosphate, fructose 6-phosphate, glucose 6-phosphate, ribose 5-phosphate, alpha-glycerophosphate, beta-glycerophosphate, 3-phosphoglycerate, phosphoenolpyruvate, as well as ADP and ATP. The chain is Phytase A (phyA) from Aspergillus fumigatus (strain ATCC MYA-4609 / CBS 101355 / FGSC A1100 / Af293) (Neosartorya fumigata).